The sequence spans 531 residues: CTP synthase (531 aa).

The tract at residues 1-265 (MAKYIFITGG…DRIITERLNL (265 aa)) is amidoligase domain. A CTP-binding site is contributed by Ser13. Ser13 is a UTP binding site. 14–19 (SLGKGI) provides a ligand contact to ATP. Position 54 (Tyr54) interacts with L-glutamine. Asp71 contributes to the ATP binding site. Mg(2+) contacts are provided by Asp71 and Glu139. CTP contacts are provided by residues 146–148 (DIE), 186–191 (KTKPTQ), and Lys222. UTP-binding positions include 186–191 (KTKPTQ) and Lys222. The 240-residue stretch at 290–529 (NVALVGKYVE…IRACLEYKRK (240 aa)) folds into the Glutamine amidotransferase type-1 domain. Gly349 is a binding site for L-glutamine. Residue Cys376 is the Nucleophile; for glutamine hydrolysis of the active site. Residues 377–380 (LGMQ), Glu400, and Arg457 contribute to the L-glutamine site. Active-site residues include His502 and Glu504.

This sequence belongs to the CTP synthase family. Homotetramer.

It carries out the reaction UTP + L-glutamine + ATP + H2O = CTP + L-glutamate + ADP + phosphate + 2 H(+). The enzyme catalyses L-glutamine + H2O = L-glutamate + NH4(+). It catalyses the reaction UTP + NH4(+) + ATP = CTP + ADP + phosphate + 2 H(+). It participates in pyrimidine metabolism; CTP biosynthesis via de novo pathway; CTP from UDP: step 2/2. With respect to regulation, allosterically activated by GTP, when glutamine is the substrate; GTP has no effect on the reaction when ammonia is the substrate. The allosteric effector GTP functions by stabilizing the protein conformation that binds the tetrahedral intermediate(s) formed during glutamine hydrolysis. Inhibited by the product CTP, via allosteric rather than competitive inhibition. In terms of biological role, catalyzes the ATP-dependent amination of UTP to CTP with either L-glutamine or ammonia as the source of nitrogen. Regulates intracellular CTP levels through interactions with the four ribonucleotide triphosphates. This chain is CTP synthase, found in Aquifex aeolicus (strain VF5).